A 144-amino-acid chain; its full sequence is Grifin (144 aa).

Positions 5-133 constitute a Galectin domain; sequence FEAFCAGGLA…DHQLAQVELA (129 aa). The residue at position 138 (Ser138) is a Phosphoserine.

As to quaternary structure, homodimer. Lens-specific. Located at the interface between lens fiber cells (at protein level).

The polypeptide is Grifin (Grifin) (Rattus norvegicus (Rat)).